Reading from the N-terminus, the 527-residue chain is Metal transporter Nramp6 (527 aa).

Helical transmembrane passes span 38 to 58 (FFSY…PGNF), 71 to 91 (ELLW…SLAA), 115 to 135 (FMLW…EVIG), 143 to 163 (LFNI…LILL), 173 to 193 (LEFL…VELH), 221 to 241 (ISLL…ALVL), 264 to 284 (GLAL…SGAV), 321 to 341 (LFAI…TYAG), 364 to 384 (CLAI…GAGK), 385 to 405 (LIII…VPLL), 427 to 447 (TWII…SSFI), and 458 to 478 (VAIV…LAAI).

This sequence belongs to the NRAMP (TC 2.A.55) family. In terms of tissue distribution, expressed in the vascular bundles of shoots, cotyledons, young leaves, sepals and petals, at the top of the flower stem and in the style. Expressed in the peduncle of developing siliques as well as in the septum and the funiculi.

It localises to the endomembrane system. Probable intracellular cadmium (Cd) transporter that participates in the distribution or availability of Cd within the cell. The chain is Metal transporter Nramp6 (NRAMP6) from Arabidopsis thaliana (Mouse-ear cress).